The sequence spans 614 residues: Sodium- and chloride-dependent betaine transporter (614 aa).

At 1-44 the chain is on the cytoplasmic side; it reads MDRKVAVHEDGYPVVSWVPEEGEMMDQKGKDQVKDRGQWTNKME. A run of 3 helical transmembrane segments spans residues 45 to 65, 73 to 92, and 117 to 137; these read FVLS…FPYL, AFFI…VFFL, and GIGM…IIIL. Residues 138–210 lie on the Extracellular side of the membrane; that stretch reads AWALFYLFSS…SGIHDLGSLR (73 aa). Cysteines 157 and 166 form a disulfide. Asn171 and Asn183 each carry an N-linked (GlcNAc...) asparagine glycan. The next 9 helical transmembrane spans lie at 211 to 229, 238 to 255, 291 to 308, 320 to 341, 374 to 393, 423 to 441, 458 to 478, 499 to 518, and 538 to 556; these read WELA…FCIW, VVYF…ILLI, IFFS…LGSY, IALC…FSIL, MPLS…FLGL, VLIL…LLVT, GICL…VYGA, ISWL…FSLS, and IGWL…FIII. Topologically, residues 557–614 are cytoplasmic; the sequence is TFLKTQGSFKKRLRRLITPDPSLPQPGRRPPQDGSSAQNCSSSPAKQELIAWEKETHL. Residues 574–602 form a disordered region; it reads TPDPSLPQPGRRPPQDGSSAQNCSSSPAK. Polar residues predominate over residues 589 to 601; that stretch reads DGSSAQNCSSSPA.

Belongs to the sodium:neurotransmitter symporter (SNF) (TC 2.A.22) family. SLC6A12 subfamily. In terms of assembly, interacts with LIN7C. In terms of tissue distribution, predominantly expressed in the liver (sinusoidal hepatocyte plasma membranes), also present in the renal medulla, where it localizes to the basolateral membranes of collecting ducts (particularly at the papilla tip) and the thick ascending limbs of Henle (at protein level). Some expression is detected in the leptomeninges, but no expression is detected in brain parenchyma, brain blood vessels, ependymal cells, the renal cortex and the intestine.

The protein localises to the basolateral cell membrane. Its subcellular location is the cell membrane. It catalyses the reaction 4-aminobutanoate(out) + chloride(out) + 3 Na(+)(out) = 4-aminobutanoate(in) + chloride(in) + 3 Na(+)(in). The enzyme catalyses glycine betaine(out) + 2 chloride(out) + 3 Na(+)(out) = glycine betaine(in) + 2 chloride(in) + 3 Na(+)(in). Its function is as follows. Transporter that mediates cellular uptake of betaine and GABA in a sodium- and chloride-dependent process. May have a role in regulation of GABAergic transmission in the brain through the reuptake of GABA into presynaptic terminals, as well as in osmotic regulation. Probably also involved in renal and hepatic osmotic regulation. The polypeptide is Sodium- and chloride-dependent betaine transporter (Slc6a12) (Mus musculus (Mouse)).